We begin with the raw amino-acid sequence, 353 residues long: Rhodopsin (353 aa).

The Extracellular portion of the chain corresponds to 1–36; sequence MNGTEGPFFYVPMVNTTGIVRSPYEYPQYYLVNPAA. N-linked (GlcNAc...) asparagine glycans are attached at residues N2 and N15. Residues 37–61 traverse the membrane as a helical segment; sequence YAALGAYMFLLILVGFPINFLTLYV. Over 62 to 73 the chain is Cytoplasmic; the sequence is TIEHKKLRTPLN. A helical membrane pass occupies residues 74–96; that stretch reads YILLNLAVADLFMVLGGFTTTMY. Residues 97–110 lie on the Extracellular side of the membrane; the sequence is TSMHGYFVLGRLGC. C110 and C187 are oxidised to a cystine. Residues 111-133 form a helical membrane-spanning segment; sequence NIEGFFATLGGEIALWSLVVLAI. A 'Ionic lock' involved in activated form stabilization motif is present at residues 134 to 136; the sequence is ERW. At 134–152 the chain is on the cytoplasmic side; it reads ERWVVVCKPISNFRFGENH. A helical membrane pass occupies residues 153–173; that stretch reads AIMGLAFTWTMAMACAAPPLV. The Extracellular portion of the chain corresponds to 174-202; sequence GWSRYIPEGMQCSCGIDYYTRAEGFNNES. A glycan (N-linked (GlcNAc...) asparagine) is linked at N200. Residues 203-224 traverse the membrane as a helical segment; that stretch reads FVIYMFICHFTIPLTVVFFCYG. The Cytoplasmic segment spans residues 225–252; it reads RLLCAVKEAAAAQQESETTQRAEKEVTR. Residues 253 to 274 traverse the membrane as a helical segment; sequence MVIMMVIAFLVCWLPYASVAWY. Residues 275–286 lie on the Extracellular side of the membrane; sequence IFTHQGSEFGPV. Residues 287–308 traverse the membrane as a helical segment; it reads FMTIPAFFAKSSSIYNPMIYIC. N6-(retinylidene)lysine is present on K296. At 309-353 the chain is on the cytoplasmic side; the sequence is LNKQFRHCMITTLCCGKNPFEEEEGASTASKTEASSVSSSSVSPA. 2 S-palmitoyl cysteine lipidation sites follow: C322 and C323. The interval 331-353 is disordered; the sequence is EEGASTASKTEASSVSSSSVSPA. A compositionally biased stretch (low complexity) spans 334 to 353; it reads ASTASKTEASSVSSSSVSPA.

It belongs to the G-protein coupled receptor 1 family. Opsin subfamily. Post-translationally, phosphorylated on some or all of the serine and threonine residues present in the C-terminal region. In terms of processing, contains one covalently linked retinal chromophore.

The protein localises to the membrane. It localises to the cell projection. The protein resides in the cilium. Its subcellular location is the photoreceptor outer segment. Its function is as follows. Photoreceptor required for image-forming vision at low light intensity. While most salt water fish species use retinal as chromophore, most freshwater fish use 3-dehydroretinal, or a mixture of retinal and 3-dehydroretinal. Light-induced isomerization of 11-cis to all-trans retinal triggers a conformational change that activates signaling via G-proteins. Subsequent receptor phosphorylation mediates displacement of the bound G-protein alpha subunit by arrestin and terminates signaling. The chain is Rhodopsin (rho) from Diplodus annularis (Annular seabream).